We begin with the raw amino-acid sequence, 171 residues long: Peptidyl-prolyl cis-trans isomerase 7 (171 aa).

In terms of domain architecture, PPIase cyclophilin-type spans 7 to 170; sequence FFDITIAGKP…SECLIADCGQ (164 aa).

Belongs to the cyclophilin-type PPIase family.

The catalysed reaction is [protein]-peptidylproline (omega=180) = [protein]-peptidylproline (omega=0). Functionally, PPIases accelerate the folding of proteins. It catalyzes the cis-trans isomerization of proline imidic peptide bonds in oligopeptides. The chain is Peptidyl-prolyl cis-trans isomerase 7 (cyn-7) from Caenorhabditis elegans.